We begin with the raw amino-acid sequence, 394 residues long: MKDYTYSVTEINEYIKDLIEGDPYLTNVSVYGEISGVRPRKGHIFFSLVEENARLECVIFGGDNMGIRLQEGRMALVEGSVSVYIPHGTYRFICSNVRYLDQAGMYQIKFETTLKKLLEEGLLSRPKKTVPRFPRKIGIITSRDSAALQDVIRTARERKAPIEIYVFHTSVQGDSAREELIKALRKANEYDLDLVMIVRGGGSKEDLWGFNEEDVIREILKLRHPVVTGIGHEIDRVIADFVADVSMHTPTGAAEYVIPDASEIHEDLDSFLEKLIASLSNRFDMEERRLETLYFRLRMIGRRKLELNEFKIERVKELAAKLRKKLMDCFEQDQEKLESLGRMLESLNPLRPLERGFVLVKKEGEIVKESSDLKRGDVVSLVFKDGTKKAQVIG.

The protein belongs to the XseA family. As to quaternary structure, heterooligomer composed of large and small subunits.

The protein localises to the cytoplasm. The enzyme catalyses Exonucleolytic cleavage in either 5'- to 3'- or 3'- to 5'-direction to yield nucleoside 5'-phosphates.. Its function is as follows. Bidirectionally degrades single-stranded DNA into large acid-insoluble oligonucleotides, which are then degraded further into small acid-soluble oligonucleotides. The protein is Exodeoxyribonuclease 7 large subunit of Thermotoga sp. (strain RQ2).